Reading from the N-terminus, the 909-residue chain is NADH-quinone oxidoreductase subunit G (909 aa).

Positions 1 to 83 constitute a 2Fe-2S ferredoxin-type domain; it reads MATIYVDGKE…GTYISIEDEE (83 aa). The [2Fe-2S] cluster site is built by Cys34, Cys45, Cys48, and Cys67. The 4Fe-4S His(Cys)3-ligated-type domain occupies 83–122; the sequence is EAKEFRKCVVEWQMTNHPHDCPVCEEGGACHLQDMTVMTG. Residues His99, Cys103, Cys106, Cys112, Cys151, Cys154, Cys157, Cys201, Cys228, Cys231, Cys235, and Cys263 each coordinate [4Fe-4S] cluster. The 57-residue stretch at 221–277 folds into the 4Fe-4S Mo/W bis-MGD-type domain; it reads MQFAPSICQQCSVGCNISPGERYGELRRIENRFHGSVNHYFLCDRGRFGYGYVNLPD.

The protein belongs to the complex I 75 kDa subunit family. As to quaternary structure, composed of 13 different subunits. Subunits NuoCD, E, F, and G constitute the peripheral sector of the complex. [2Fe-2S] cluster serves as cofactor. [4Fe-4S] cluster is required as a cofactor.

The enzyme catalyses a quinone + NADH + 5 H(+)(in) = a quinol + NAD(+) + 4 H(+)(out). In terms of biological role, NDH-1 shuttles electrons from NADH, via FMN and iron-sulfur (Fe-S) centers, to quinones in the respiratory chain. The immediate electron acceptor for the enzyme in this species is believed to be ubiquinone. Couples the redox reaction to proton translocation (for every two electrons transferred, four hydrogen ions are translocated across the cytoplasmic membrane), and thus conserves the redox energy in a proton gradient. The polypeptide is NADH-quinone oxidoreductase subunit G (nuoG) (Shewanella oneidensis (strain ATCC 700550 / JCM 31522 / CIP 106686 / LMG 19005 / NCIMB 14063 / MR-1)).